We begin with the raw amino-acid sequence, 276 residues long: Pantothenate synthetase (276 aa).

27-34 serves as a coordination point for ATP; it reads MGALHKGH. The active-site Proton donor is histidine 34. Glutamine 58 provides a ligand contact to (R)-pantoate. Glutamine 58 serves as a coordination point for beta-alanine. 147–150 serves as a coordination point for ATP; sequence GKKD. A (R)-pantoate-binding site is contributed by glutamine 153. Residues valine 176 and 184–187 contribute to the ATP site; that span reads LSSR.

This sequence belongs to the pantothenate synthetase family. Homodimer.

The protein resides in the cytoplasm. The enzyme catalyses (R)-pantoate + beta-alanine + ATP = (R)-pantothenate + AMP + diphosphate + H(+). It participates in cofactor biosynthesis; (R)-pantothenate biosynthesis; (R)-pantothenate from (R)-pantoate and beta-alanine: step 1/1. Catalyzes the condensation of pantoate with beta-alanine in an ATP-dependent reaction via a pantoyl-adenylate intermediate. The chain is Pantothenate synthetase from Helicobacter pylori (strain ATCC 700392 / 26695) (Campylobacter pylori).